The following is a 119-amino-acid chain: NADH-quinone oxidoreductase subunit A (119 aa).

A run of 3 helical transmembrane segments spans residues Phe7 to Gly27, Leu63 to Val83, and Ile88 to Val108.

This sequence belongs to the complex I subunit 3 family. NDH-1 is composed of 14 different subunits. Subunits NuoA, H, J, K, L, M, N constitute the membrane sector of the complex.

The protein localises to the cell inner membrane. It carries out the reaction a quinone + NADH + 5 H(+)(in) = a quinol + NAD(+) + 4 H(+)(out). In terms of biological role, NDH-1 shuttles electrons from NADH, via FMN and iron-sulfur (Fe-S) centers, to quinones in the respiratory chain. The immediate electron acceptor for the enzyme in this species is believed to be ubiquinone. Couples the redox reaction to proton translocation (for every two electrons transferred, four hydrogen ions are translocated across the cytoplasmic membrane), and thus conserves the redox energy in a proton gradient. The chain is NADH-quinone oxidoreductase subunit A from Ralstonia pickettii (strain 12J).